The chain runs to 460 residues: uncharacterized protein (460 aa).

In terms of domain architecture, TRAM spans Pro-6–Asn-64. The [4Fe-4S] cluster site is built by Cys-77, Cys-83, Cys-86, and Cys-163. S-adenosyl-L-methionine is bound by residues Gln-287, Tyr-316, Glu-337, and Asp-385. Residue Cys-412 is the Nucleophile of the active site.

The protein belongs to the class I-like SAM-binding methyltransferase superfamily. RNA M5U methyltransferase family.

This is an uncharacterized protein from Clostridium tetani (strain Massachusetts / E88).